The primary structure comprises 388 residues: Chorismate synthase (388 aa).

Residues R39 and R45 each contribute to the NADP(+) site. FMN contacts are provided by residues R132 to S134, N251 to A252, G296, K311 to T315, and R337.

Belongs to the chorismate synthase family. As to quaternary structure, homotetramer. It depends on FMNH2 as a cofactor.

The enzyme catalyses 5-O-(1-carboxyvinyl)-3-phosphoshikimate = chorismate + phosphate. The protein operates within metabolic intermediate biosynthesis; chorismate biosynthesis; chorismate from D-erythrose 4-phosphate and phosphoenolpyruvate: step 7/7. In terms of biological role, catalyzes the anti-1,4-elimination of the C-3 phosphate and the C-6 proR hydrogen from 5-enolpyruvylshikimate-3-phosphate (EPSP) to yield chorismate, which is the branch point compound that serves as the starting substrate for the three terminal pathways of aromatic amino acid biosynthesis. This reaction introduces a second double bond into the aromatic ring system. The sequence is that of Chorismate synthase from Staphylococcus aureus (strain bovine RF122 / ET3-1).